The sequence spans 506 residues: Tabersonine 16-hydroxylase 1 (506 aa).

A helical membrane pass occupies residues 1 to 21 (MEFYYFLYLAFLLFCFILSKT). Heme is bound at residue Cys447.

It belongs to the cytochrome P450 family. It depends on heme as a cofactor. In terms of tissue distribution, predominantly expressed in young leaves of mature plants. Low expression in roots and flowers, but not detected in stems and old leaves. Found predominantly in leaf epidermis. Barely detected in roots, internodes, young and mature leaves, and flower buds, but relatively abundant in fully developed flowers. Not detected in leaf epidermal cells.

It is found in the endoplasmic reticulum membrane. It catalyses the reaction (-)-tabersonine + reduced [NADPH--hemoprotein reductase] + O2 = 16-hydroxytabersonine + oxidized [NADPH--hemoprotein reductase] + H2O + H(+). It participates in alkaloid biosynthesis; vindoline biosynthesis. In terms of biological role, involved in the flower biosynthesis of vindoline, a precursor of vinblastine and vincristine. Hydroxylates specifically tabersonine, 2,3-dihydrotabersonine and 2,3-dihydro-3-hydroxytabersonine, but has no activity with naringenin, tryptamine, secologanin, strictosidine, ajmalicine, vindoline and catharanthine. This chain is Tabersonine 16-hydroxylase 1, found in Catharanthus roseus (Madagascar periwinkle).